The chain runs to 159 residues: 2-C-methyl-D-erythritol 2,4-cyclodiphosphate synthase (159 aa).

Residues Asp10 and His12 each contribute to the a divalent metal cation site. 4-CDP-2-C-methyl-D-erythritol 2-phosphate-binding positions include 10 to 12 and 36 to 37; these read DVH and HS. Residue His44 participates in a divalent metal cation binding. Residues 58-60, 63-67, 102-108, 134-137, Phe141, and Arg144 contribute to the 4-CDP-2-C-methyl-D-erythritol 2-phosphate site; these read DIG, FPDTD, AQAPKMA, and TTTE.

Belongs to the IspF family. Homotrimer. A divalent metal cation serves as cofactor.

The enzyme catalyses 4-CDP-2-C-methyl-D-erythritol 2-phosphate = 2-C-methyl-D-erythritol 2,4-cyclic diphosphate + CMP. It functions in the pathway isoprenoid biosynthesis; isopentenyl diphosphate biosynthesis via DXP pathway; isopentenyl diphosphate from 1-deoxy-D-xylulose 5-phosphate: step 4/6. Functionally, involved in the biosynthesis of isopentenyl diphosphate (IPP) and dimethylallyl diphosphate (DMAPP), two major building blocks of isoprenoid compounds. Catalyzes the conversion of 4-diphosphocytidyl-2-C-methyl-D-erythritol 2-phosphate (CDP-ME2P) to 2-C-methyl-D-erythritol 2,4-cyclodiphosphate (ME-CPP) with a corresponding release of cytidine 5-monophosphate (CMP). This chain is 2-C-methyl-D-erythritol 2,4-cyclodiphosphate synthase, found in Shewanella halifaxensis (strain HAW-EB4).